A 137-amino-acid polypeptide reads, in one-letter code: MTSEQIPNRVLLFDGVCNLCNGAVQFIIKRDPDGLISFTSLQSETGQSLLKKSGLPTDRFDSFVFIEDGQVYTKSTAAIKVFRHLRGPWRLFVLFFAVPKPVRDMVYSFIAKNRYKWFGKKNECMLPSPSIKKRFLP.

It belongs to the DCC thiol-disulfide oxidoreductase family.

This is an uncharacterized protein from Bacillus subtilis (strain 168).